A 231-amino-acid chain; its full sequence is 5'-methylthioadenosine/S-adenosylhomocysteine nucleosidase (231 aa).

E12 (proton acceptor) is an active-site residue. Substrate-binding positions include G78, M153, and 174-175; that span reads ME. The active-site Proton donor is D198.

The protein belongs to the PNP/UDP phosphorylase family. MtnN subfamily.

The catalysed reaction is S-adenosyl-L-homocysteine + H2O = S-(5-deoxy-D-ribos-5-yl)-L-homocysteine + adenine. The enzyme catalyses S-methyl-5'-thioadenosine + H2O = 5-(methylsulfanyl)-D-ribose + adenine. It carries out the reaction 5'-deoxyadenosine + H2O = 5-deoxy-D-ribose + adenine. It participates in amino-acid biosynthesis; L-methionine biosynthesis via salvage pathway; S-methyl-5-thio-alpha-D-ribose 1-phosphate from S-methyl-5'-thioadenosine (hydrolase route): step 1/2. Catalyzes the irreversible cleavage of the glycosidic bond in both 5'-methylthioadenosine (MTA) and S-adenosylhomocysteine (SAH/AdoHcy) to adenine and the corresponding thioribose, 5'-methylthioribose and S-ribosylhomocysteine, respectively. Also cleaves 5'-deoxyadenosine, a toxic by-product of radical S-adenosylmethionine (SAM) enzymes, into 5-deoxyribose and adenine. The sequence is that of 5'-methylthioadenosine/S-adenosylhomocysteine nucleosidase from Bacillus licheniformis (strain ATCC 14580 / DSM 13 / JCM 2505 / CCUG 7422 / NBRC 12200 / NCIMB 9375 / NCTC 10341 / NRRL NRS-1264 / Gibson 46).